Consider the following 237-residue polypeptide: Histone H1E (237 aa).

The span at 1 to 21 (MSDPAQEVEAPVEAAPVASSP) shows a compositional bias: low complexity. Disordered stretches follow at residues 1-56 (MSDP…PVSE) and 109-237 (LQAK…KKAK). The span at 26–42 (EKAPKAPKAEKPKSDKP) shows a compositional bias: basic and acidic residues. The region spanning 50-124 (THPPVSEMVV…GASGSFKLPP (75 aa)) is the H15 domain. Residues 182–195 (AKPAAKKAAAPKPK) are compositionally biased toward low complexity. The span at 200-209 (PKKEVKPKKE) shows a compositional bias: basic and acidic residues. Positions 210 to 237 (AKPKKAAAKPAKKPAAKPAKKPAAKKAK) are enriched in basic residues.

Belongs to the histone H1/H5 family.

It is found in the nucleus. The protein resides in the chromosome. Its function is as follows. Histones H1 are necessary for the condensation of nucleosome chains into higher-order structures. The polypeptide is Histone H1E (Chironomus tentans (Midge)).